The chain runs to 343 residues: Protein RecA (343 aa).

66–73 contributes to the ATP binding site; sequence GPESSGKT. Residues 319–343 are disordered; sequence IERQIREKHLPKRSAKADEAESAEA.

This sequence belongs to the RecA family.

Its subcellular location is the cytoplasm. In terms of biological role, can catalyze the hydrolysis of ATP in the presence of single-stranded DNA, the ATP-dependent uptake of single-stranded DNA by duplex DNA, and the ATP-dependent hybridization of homologous single-stranded DNAs. It interacts with LexA causing its activation and leading to its autocatalytic cleavage. The polypeptide is Protein RecA (Thioalkalivibrio sulfidiphilus (strain HL-EbGR7)).